Reading from the N-terminus, the 478-residue chain is Putative malate transporter YflS (478 aa).

The next 12 membrane-spanning stretches (helical) occupy residues 12–31 (AVKL…IWFI), 41–57 (AWHL…GFIS), 64–81 (AIAI…TLSI), 96–118 (IVIA…ISYV), 187–209 (GFQG…PLIA), 222–244 (WTSW…PLVI), 277–296 (LSMV…GGSF), 300–319 (ATTT…VLTW), 332–354 (LTWF…VSWF), 364–386 (GFSW…YFFA), 398–420 (AFLA…LAFI), and 450–472 (WSIG…GLWW).

This sequence belongs to the SLC13A/DASS transporter (TC 2.A.47) family. DIT1 subfamily.

It localises to the cell membrane. In terms of biological role, might be a malate transporter. This is Putative malate transporter YflS (yflS) from Bacillus subtilis (strain 168).